Here is a 92-residue protein sequence, read N- to C-terminus: MARSLKKGPYVDLHLLKKVDAVRASNDKRPIKTWSRRSTILPDFIGLTIAVHNGRTHVPVFISDNMVGHKLGEFSLTRTFKGHLADKKAKKK.

Belongs to the universal ribosomal protein uS19 family.

In terms of biological role, protein S19 forms a complex with S13 that binds strongly to the 16S ribosomal RNA. This chain is Small ribosomal subunit protein uS19, found in Neisseria gonorrhoeae (strain ATCC 700825 / FA 1090).